Reading from the N-terminus, the 355-residue chain is Gentisate 1,2-dioxygenase (355 aa).

The Cupin type-2 domain occupies 106–174 (MQLLLPGEWA…GNEPVVWLDV (69 aa)).

It belongs to the gentisate 1,2-dioxygenase family.

The enzyme catalyses 2,5-dihydroxybenzoate + O2 = 3-maleylpyruvate + H(+). Its pathway is aromatic compound metabolism; naphthalene degradation. In terms of biological role, catalyzes the oxygen-dependent ring fission of gentisate between the carboxyl and proximal hydroxyl groups at positions 1 and 2 of the aromatic ring to form maleylpyruvate. Can also catalyze oxidation of alkyl- and halogenated gentisates. Exhibits higher affinity for 3-substituted gentisates than for gentisate but has higher activity with gentisate. This Ralstonia sp protein is Gentisate 1,2-dioxygenase.